A 282-amino-acid polypeptide reads, in one-letter code: Shikimate kinase (282 aa).

86–96 (PIKSGLSSSSA) is a binding site for ATP.

The protein belongs to the GHMP kinase family. Archaeal shikimate kinase subfamily.

The protein resides in the cytoplasm. The enzyme catalyses shikimate + ATP = 3-phosphoshikimate + ADP + H(+). It functions in the pathway metabolic intermediate biosynthesis; chorismate biosynthesis; chorismate from D-erythrose 4-phosphate and phosphoenolpyruvate: step 5/7. This is Shikimate kinase (aroK) from Methanocaldococcus jannaschii (strain ATCC 43067 / DSM 2661 / JAL-1 / JCM 10045 / NBRC 100440) (Methanococcus jannaschii).